We begin with the raw amino-acid sequence, 487 residues long: Protein nucleotidyltransferase YdiU (487 aa).

Positions 90, 92, 93, 113, 125, 126, 176, and 183 each coordinate ATP. The active-site Proton acceptor is D252. Residues N253 and D262 each coordinate Mg(2+). D262 provides a ligand contact to ATP.

Belongs to the SELO family. Mg(2+) serves as cofactor. It depends on Mn(2+) as a cofactor.

It carries out the reaction L-seryl-[protein] + ATP = 3-O-(5'-adenylyl)-L-seryl-[protein] + diphosphate. The enzyme catalyses L-threonyl-[protein] + ATP = 3-O-(5'-adenylyl)-L-threonyl-[protein] + diphosphate. The catalysed reaction is L-tyrosyl-[protein] + ATP = O-(5'-adenylyl)-L-tyrosyl-[protein] + diphosphate. It catalyses the reaction L-histidyl-[protein] + UTP = N(tele)-(5'-uridylyl)-L-histidyl-[protein] + diphosphate. It carries out the reaction L-seryl-[protein] + UTP = O-(5'-uridylyl)-L-seryl-[protein] + diphosphate. The enzyme catalyses L-tyrosyl-[protein] + UTP = O-(5'-uridylyl)-L-tyrosyl-[protein] + diphosphate. Functionally, nucleotidyltransferase involved in the post-translational modification of proteins. It can catalyze the addition of adenosine monophosphate (AMP) or uridine monophosphate (UMP) to a protein, resulting in modifications known as AMPylation and UMPylation. This chain is Protein nucleotidyltransferase YdiU, found in Pseudomonas syringae pv. syringae (strain B728a).